The chain runs to 256 residues: DNA repair protein RecO (256 aa).

It belongs to the RecO family.

Involved in DNA repair and RecF pathway recombination. The chain is DNA repair protein RecO from Shouchella clausii (strain KSM-K16) (Alkalihalobacillus clausii).